The chain runs to 223 residues: Probable GTP-binding protein EngB (223 aa).

The EngB-type G domain maps to 25–199; sequence TGVEIAFAGR…SRLLQDWFDE (175 aa). GTP is bound by residues 33–40, 60–64, 78–81, 145–148, and 178–180; these read GRSNAGKS, GRTQH, DLPG, TKAD, and FSS. Positions 40 and 62 each coordinate Mg(2+).

This sequence belongs to the TRAFAC class TrmE-Era-EngA-EngB-Septin-like GTPase superfamily. EngB GTPase family. It depends on Mg(2+) as a cofactor.

Its function is as follows. Necessary for normal cell division and for the maintenance of normal septation. This Nitrosomonas eutropha (strain DSM 101675 / C91 / Nm57) protein is Probable GTP-binding protein EngB.